Reading from the N-terminus, the 248-residue chain is uncharacterized protein (248 aa).

9 to 33 (IITGASSGIGEATAILLAEKGAKLV) contributes to the NADP(+) binding site. Ser-141 provides a ligand contact to substrate. Tyr-154 functions as the Proton acceptor in the catalytic mechanism.

The protein belongs to the short-chain dehydrogenases/reductases (SDR) family.

This is an uncharacterized protein from Listeria innocua serovar 6a (strain ATCC BAA-680 / CLIP 11262).